The primary structure comprises 148 residues: Protein SprT-like (148 aa).

The region spanning 6–147 is the SprT-like domain; it reads LQQLVATISM…CGRCQGPIKL (142 aa). His-67 is a Zn(2+) binding site. The active site involves Glu-68. Residue His-71 coordinates Zn(2+).

Belongs to the SprT family. Zn(2+) is required as a cofactor.

It is found in the cytoplasm. The chain is Protein SprT-like from Lactiplantibacillus plantarum (strain ATCC BAA-793 / NCIMB 8826 / WCFS1) (Lactobacillus plantarum).